A 198-amino-acid polypeptide reads, in one-letter code: Ribonuclease HII (198 aa).

An RNase H type-2 domain is found at 10–198 (HLVAGVDEVG…PVKRALGLVS (189 aa)). 3 residues coordinate a divalent metal cation: D16, E17, and D108.

The protein belongs to the RNase HII family. The cofactor is Mn(2+). Requires Mg(2+) as cofactor.

The protein localises to the cytoplasm. It carries out the reaction Endonucleolytic cleavage to 5'-phosphomonoester.. Endonuclease that specifically degrades the RNA of RNA-DNA hybrids. In Salmonella schwarzengrund (strain CVM19633), this protein is Ribonuclease HII.